A 217-amino-acid chain; its full sequence is Killer cell lectin-like receptor subfamily B member 1F (217 aa).

At 1–45 (MDTSRVYGNVKTFRSPGHKQASFPSLSTDACRCPHWHHLALKLGC) the chain is on the cytoplasmic side. An LCK-binding motif motif is present at residues 31 to 34 (CRCP). The helical; Signal-anchor for type II membrane protein transmembrane segment at 46-66 (ATLILLLLTLIGLSVFVRFLV) threads the bilayer. The Extracellular portion of the chain corresponds to 67-217 (QKPLIEKCSM…WICQKTLKHV (151 aa)). The 111-residue stretch at 101-211 (HRNKCLIISQ…CSSDNHWICQ (111 aa)) folds into the C-type lectin domain. Disulfide bonds link cysteine 122-cysteine 210 and cysteine 189-cysteine 202.

As to expression, expressed in natural killer cells and a subset of T-cells.

The protein resides in the membrane. Functionally, binds CLEC2I/Clr-g leading to activation of natural killer cells or stimulation of IL-2 production and proliferation of T-cells in response to antigen stimulation. May contribute to the formation of the immunological synapse between T-cells and antigen-presenting dendritic cells. This Rattus norvegicus (Rat) protein is Killer cell lectin-like receptor subfamily B member 1F.